The chain runs to 424 residues: Serine hydroxymethyltransferase 1 (424 aa).

(6S)-5,6,7,8-tetrahydrofolate is bound by residues L125 and 129–131; that span reads GHL. An N6-(pyridoxal phosphate)lysine modification is found at K234.

Belongs to the SHMT family. As to quaternary structure, homodimer. Pyridoxal 5'-phosphate serves as cofactor.

The protein resides in the cytoplasm. The catalysed reaction is (6R)-5,10-methylene-5,6,7,8-tetrahydrofolate + glycine + H2O = (6S)-5,6,7,8-tetrahydrofolate + L-serine. Its pathway is one-carbon metabolism; tetrahydrofolate interconversion. It participates in amino-acid biosynthesis; glycine biosynthesis; glycine from L-serine: step 1/1. Its function is as follows. Catalyzes the reversible interconversion of serine and glycine with tetrahydrofolate (THF) serving as the one-carbon carrier. This reaction serves as the major source of one-carbon groups required for the biosynthesis of purines, thymidylate, methionine, and other important biomolecules. Also exhibits THF-independent aldolase activity toward beta-hydroxyamino acids, producing glycine and aldehydes, via a retro-aldol mechanism. The chain is Serine hydroxymethyltransferase 1 from Burkholderia lata (strain ATCC 17760 / DSM 23089 / LMG 22485 / NCIMB 9086 / R18194 / 383).